Here is a 521-residue protein sequence, read N- to C-terminus: SET and MYND domain-containing protein DDB_G0292140 (521 aa).

The interval 1-101 is disordered; sequence MDGVIESPSN…KIKKSKKSIK (101 aa). A compositionally biased stretch (low complexity) spans 12–55; sequence TIKISPSTSDSSTTTPIITTPPTQSTATVTTKAAATTTTTEAST. The span at 56 to 65 shows a compositional bias: pro residues; sequence TPPPPQPTPT. Residues 66-90 show a composition bias toward low complexity; sequence PTQSTATVTKEVETTTETIPPIVTK. The span at 91–101 shows a compositional bias: basic residues; it reads GKIKKSKKSIK. The SET domain occupies 122–406; the sequence is WPIHVYSHPI…EGDELTISYI (285 aa). Zn(2+) contacts are provided by cysteine 167, cysteine 170, cysteine 188, cysteine 191, cysteine 197, cysteine 201, histidine 209, and cysteine 213. Residues 167–213 form an MYND-type zinc finger; sequence CQHCFLEVPLNQQILPTDFYMCEGCQRVGYCSANCRCIDYSQHRFEC. Residues 442-521 are disordered; it reads QTGTLEKDDD…QDHQNNDKSN (80 aa). Over residues 448 to 469 the composition is skewed to acidic residues; that stretch reads KDDDDNDDEKEKMDEDDDEKDD. Residues 470–485 are compositionally biased toward basic and acidic residues; sequence DINNKNDKKSKYKSDG. Residues 486–495 show a composition bias toward acidic residues; the sequence is STDDEEDEDN. A compositionally biased stretch (low complexity) spans 497–514; it reads NNKNNNKNKNNNSNNQDH.

The protein belongs to the class V-like SAM-binding methyltransferase superfamily.

Its function is as follows. Probable methyltransferase. This is SET and MYND domain-containing protein DDB_G0292140 from Dictyostelium discoideum (Social amoeba).